The sequence spans 583 residues: 2-succinyl-5-enolpyruvyl-6-hydroxy-3-cyclohexene-1-carboxylate synthase (583 aa).

Belongs to the TPP enzyme family. MenD subfamily. As to quaternary structure, homodimer. It depends on Mg(2+) as a cofactor. Mn(2+) is required as a cofactor. Requires thiamine diphosphate as cofactor.

The enzyme catalyses isochorismate + 2-oxoglutarate + H(+) = 5-enolpyruvoyl-6-hydroxy-2-succinyl-cyclohex-3-ene-1-carboxylate + CO2. The protein operates within quinol/quinone metabolism; 1,4-dihydroxy-2-naphthoate biosynthesis; 1,4-dihydroxy-2-naphthoate from chorismate: step 2/7. It participates in cofactor biosynthesis; phylloquinone biosynthesis. Its function is as follows. Catalyzes the thiamine diphosphate-dependent decarboxylation of 2-oxoglutarate and the subsequent addition of the resulting succinic semialdehyde-thiamine pyrophosphate anion to isochorismate to yield 2-succinyl-5-enolpyruvyl-6-hydroxy-3-cyclohexene-1-carboxylate (SEPHCHC). The protein is 2-succinyl-5-enolpyruvyl-6-hydroxy-3-cyclohexene-1-carboxylate synthase of Trichormus variabilis (strain ATCC 29413 / PCC 7937) (Anabaena variabilis).